We begin with the raw amino-acid sequence, 448 residues long: 5-hydroxytryptamine receptor 7 (448 aa).

At 1–86 (MMDVNSSGRP…INYGRVEKVV (86 aa)) the chain is on the extracellular side. 2 N-linked (GlcNAc...) asparagine glycosylation sites follow: Asn-5 and Asn-69. The helical transmembrane segment at 87–111 (IGSILTLITLLTIAGNCLVVISVCF) threads the bilayer. The Cytoplasmic segment spans residues 112–121 (VKKLRQPSNY). Residues 122-143 (LIVSLALADLSVAVAVMPFVSV) form a helical membrane-spanning segment. Topologically, residues 144-155 (TDLIGGKWIFGH) are extracellular. Residues 156–181 (FFCNVFIAMDVMCCTASIMTLCVISI) form a helical membrane-spanning segment. An intrachain disulfide couples Cys-158 to Cys-234. Asp-165 contacts serotonin. Residues 182-201 (DRYLGITRPLTYPVRQNGKC) lie on the Cytoplasmic side of the membrane. Residues 202–222 (MAKMILSVWLLSASITLPPLF) traverse the membrane as a helical segment. Over 223–240 (GWAQNVNDDKVCLISQDF) the chain is Extracellular. The helical transmembrane segment at 241 to 263 (GYTIYSTAVAFYIPMSVMLFMYY) threads the bilayer. Over 264–329 (QIYKAARKSA…SIFKREQKAA (66 aa)) the chain is Cytoplasmic. Residues 330–355 (TTLGIIVGAFTVCWLPFFLLSTARPF) form a helical membrane-spanning segment. At 356-366 (ICGTSCSCIPL) the chain is on the extracellular side. A helical membrane pass occupies residues 367–390 (WVERTCLWLGYANSLINPFIYAFF). The Cytoplasmic portion of the chain corresponds to 391–448 (NRDLRTTYRSLLQCQYRNINRKLSAAGMHEALKLAERPERSEFVLQNSDHCGKKGHDT). Cys-404 carries S-palmitoyl cysteine lipidation.

Belongs to the G-protein coupled receptor 1 family. As to expression, thalamus, hypothalamus, and the hippocampal rudiments.

The protein resides in the cell membrane. Its function is as follows. G-protein coupled receptor for 5-hydroxytryptamine (serotonin), a biogenic hormone that functions as a neurotransmitter, a hormone and a mitogen. Ligand binding causes a conformation change that triggers signaling via guanine nucleotide-binding proteins (G proteins) and modulates the activity of downstream effectors. HTR7 is coupled to G(s) G alpha proteins and mediates activation of adenylate cyclase activity. The chain is 5-hydroxytryptamine receptor 7 from Rattus norvegicus (Rat).